Consider the following 428-residue polypeptide: Phosphomethylpyrimidine synthase 2 (428 aa).

Substrate-binding positions include asparagine 65, methionine 94, tyrosine 123, histidine 158, 180-182 (SRG), 221-224 (DGMR), and glutamate 260. Residue histidine 264 coordinates Zn(2+). Residue tyrosine 287 coordinates substrate. Residue histidine 328 coordinates Zn(2+). 3 residues coordinate [4Fe-4S] cluster: cysteine 405, cysteine 408, and cysteine 412.

This sequence belongs to the ThiC family. Requires [4Fe-4S] cluster as cofactor.

It carries out the reaction 5-amino-1-(5-phospho-beta-D-ribosyl)imidazole + S-adenosyl-L-methionine = 4-amino-2-methyl-5-(phosphooxymethyl)pyrimidine + CO + 5'-deoxyadenosine + formate + L-methionine + 3 H(+). It participates in cofactor biosynthesis; thiamine diphosphate biosynthesis. Its function is as follows. Catalyzes the synthesis of the hydroxymethylpyrimidine phosphate (HMP-P) moiety of thiamine from aminoimidazole ribotide (AIR) in a radical S-adenosyl-L-methionine (SAM)-dependent reaction. This is Phosphomethylpyrimidine synthase 2 from Methanosarcina barkeri (strain Fusaro / DSM 804).